The primary structure comprises 200 residues: dTTP/UTP pyrophosphatase (200 aa).

Aspartate 73 functions as the Proton acceptor in the catalytic mechanism.

It belongs to the Maf family. YhdE subfamily. A divalent metal cation is required as a cofactor.

It is found in the cytoplasm. The enzyme catalyses dTTP + H2O = dTMP + diphosphate + H(+). It catalyses the reaction UTP + H2O = UMP + diphosphate + H(+). Its function is as follows. Nucleoside triphosphate pyrophosphatase that hydrolyzes dTTP and UTP. May have a dual role in cell division arrest and in preventing the incorporation of modified nucleotides into cellular nucleic acids. This Chromohalobacter salexigens (strain ATCC BAA-138 / DSM 3043 / CIP 106854 / NCIMB 13768 / 1H11) protein is dTTP/UTP pyrophosphatase.